Here is a 157-residue protein sequence, read N- to C-terminus: Endoribonuclease YbeY (157 aa).

The Zn(2+) site is built by His112, His116, and His122.

This sequence belongs to the endoribonuclease YbeY family. Zn(2+) serves as cofactor.

The protein resides in the cytoplasm. Single strand-specific metallo-endoribonuclease involved in late-stage 70S ribosome quality control and in maturation of the 3' terminus of the 16S rRNA. This Marinobacter nauticus (strain ATCC 700491 / DSM 11845 / VT8) (Marinobacter aquaeolei) protein is Endoribonuclease YbeY.